Consider the following 107-residue polypeptide: Large ribosomal subunit protein uL24 (107 aa).

It belongs to the universal ribosomal protein uL24 family. As to quaternary structure, part of the 50S ribosomal subunit.

One of two assembly initiator proteins, it binds directly to the 5'-end of the 23S rRNA, where it nucleates assembly of the 50S subunit. Its function is as follows. One of the proteins that surrounds the polypeptide exit tunnel on the outside of the subunit. The protein is Large ribosomal subunit protein uL24 of Nitratidesulfovibrio vulgaris (strain ATCC 29579 / DSM 644 / CCUG 34227 / NCIMB 8303 / VKM B-1760 / Hildenborough) (Desulfovibrio vulgaris).